We begin with the raw amino-acid sequence, 993 residues long: MATQVIMVGEFKILEVNCKPHAPVAAIHVPTQTPKTNDIKWADLEFTLAKSLQRQAHGVVKVDKHGTARIKRASKHHMSCLEQQMADEVAEKEAFMAAPTQLVTSIIFAGTTPPSMMETETIVKKIHTVGKRAKVMRKRSYITPPTDKSLRNHGVTPYSVQQLCRTLGNLSKRTGISLEVVGKTSKATKLRFTKTSFGHMARVQLKHHDGRMHRRDLVVDTSTTTIMQTLFLKTARTNANLDVLTHGSSGLVFWNYLVTGQRMRTRDNFIIVRGRCNGILVDARAKLSESTMLSTHHYSTGDVFWRGFNRTFLENKPINLDHVCSSDFSVEECGSIAALICQSLLPCGKITCRACAAKNLNMDEDTFKEFQTQRAREISAVIISEHPNFACVSQFIDRYFSHQRVLNPNVNAYREILKIVGGFTQSPYTHIQELNEILVLGGRATPEQLGSASAHLLEITRFVRNRTDNIKKGSLALFRNKISAKAHVNTALMCDNQLDRNGNLIWGERGYHAKRFFSNYFDIITPGGGYKQYIERRVPNGIRKLAIGNLIVTTNLEALREQLEGESIEKKAVTKACVSMSDNNYKYPCCCVTLDDGTPLYSTFIMPTKNHLVIGNSGDPKFLDLPADISTQMYIAKSGYCYINIFLAMLVNVDESDAKDFTKKVRDIIVPDLGEWPTLIDVATSCSLLSAFYPATSAAELPRILVDHDLKTMHVIDSYGSLNTGYHVLKANTIRQLIQFASNSLDSEMKHYRVGGTSNSQINGYATIKMLAKAVYRPKLMKEIIHEQPFMLVMSLMSPGILIALANSGALEMGIHHWIREGDSLVKMAHMLRTVAQNVSVARATWVQQEIISDSAQQMLETILNGTIPNVSYFQAIQYLTMLAASKEVDAEVRVTGYYTFKLQTSELLEKNLLEPVGGFMARVKLFWKISSNKTFAKVLHCGYNCCQARKARRLRRNLRYILSVCTGQTDGILQESSLSGCEWIASPIQQHH.

One can recognise a Peptidase S30 domain in the interval 154–298; the sequence is GVTPYSVQQL…ESTMLSTHHY (145 aa). Active-site for P1 proteinase activity residues include His207, Asp216, and Ser249. The Involved in interaction with stylet and aphid transmission motif lies at 349–352; the sequence is KITC. The short motif at 607–609 is the Involved in virions binding and aphid transmission element; sequence PTK. The Peptidase C6 domain occupies 633-755; that stretch reads MYIAKSGYCY…DSEMKHYRVG (123 aa). Residues Cys641 and His714 each act as for helper component proteinase activity in the active site.

The protein belongs to the potyviridae P3N-PIPO polyprotein family. As to quaternary structure, interacts (via PIPO domain) with host PCaP1 protein; this interaction may help to anchor the movement complex to the plasma membrane from which the complex could move to the plasmodesmata. Potyviral RNA is expressed as two polyproteins which undergo post-translational proteolytic processing. Genome polyprotein is processed by NIa-pro, P1 and HC-pro proteinases resulting in the production of at least ten individual proteins. P3N-PIPO is cleaved by P1 and HC-pro proteinases resulting in the production of three individual proteins. The P1 proteinase and the HC-pro cleave only their respective C-termini autocatalytically.

Its subcellular location is the host cell junction. It localises to the host plasmodesma. It carries out the reaction Hydrolyzes a Gly-|-Gly bond at its own C-terminus, commonly in the sequence -Tyr-Xaa-Val-Gly-|-Gly, in the processing of the potyviral polyprotein.. Its function is as follows. Required for aphid transmission and also has proteolytic activity. Only cleaves a Gly-Gly dipeptide at its own C-terminus. Interacts with virions and aphid stylets. Acts as a suppressor of RNA-mediated gene silencing, also known as post-transcriptional gene silencing (PTGS), a mechanism of plant viral defense that limits the accumulation of viral RNAs. May have RNA-binding activity. Allows efficient cell to cell propagation, by bypassing the host cell wall barrier. Transports viral genome to neighboring plant cells directly through plasmosdesmata, without any budding. The polypeptide is P3N-PIPO polyprotein (Solanum betaceum (Tamarillo)).